Here is a 264-residue protein sequence, read N- to C-terminus: 3-methyl-2-oxobutanoate hydroxymethyltransferase (264 aa).

The Mg(2+) site is built by Asp45 and Asp84. Residues 45–46 (DS), Asp84, and Lys112 contribute to the 3-methyl-2-oxobutanoate site. Glu114 provides a ligand contact to Mg(2+). The active-site Proton acceptor is Glu181.

This sequence belongs to the PanB family. As to quaternary structure, homodecamer; pentamer of dimers. The cofactor is Mg(2+).

The protein localises to the cytoplasm. It carries out the reaction 3-methyl-2-oxobutanoate + (6R)-5,10-methylene-5,6,7,8-tetrahydrofolate + H2O = 2-dehydropantoate + (6S)-5,6,7,8-tetrahydrofolate. Its pathway is cofactor biosynthesis; (R)-pantothenate biosynthesis; (R)-pantoate from 3-methyl-2-oxobutanoate: step 1/2. Catalyzes the reversible reaction in which hydroxymethyl group from 5,10-methylenetetrahydrofolate is transferred onto alpha-ketoisovalerate to form ketopantoate. The polypeptide is 3-methyl-2-oxobutanoate hydroxymethyltransferase (Shewanella putrefaciens (strain CN-32 / ATCC BAA-453)).